We begin with the raw amino-acid sequence, 140 residues long: Small ribosomal subunit protein uS19 (140 aa).

The disordered stretch occupies residues 43–71; that stretch reads IERGLTTEQQKLRETVRDADPQKTANDPI. Residues 52–63 are compositionally biased toward basic and acidic residues; the sequence is QKLRETVRDADP.

This sequence belongs to the universal ribosomal protein uS19 family.

Its function is as follows. Protein S19 forms a complex with S13 that binds strongly to the 16S ribosomal RNA. The chain is Small ribosomal subunit protein uS19 from Haloquadratum walsbyi (strain DSM 16790 / HBSQ001).